An 82-amino-acid chain; its full sequence is Putative ribonuclease VapC34 (82 aa).

D4 lines the Mg(2+) pocket.

This sequence belongs to the PINc/VapC protein family. Mg(2+) is required as a cofactor.

Its function is as follows. Toxic component of a possible type II toxin-antitoxin (TA) system. A putative RNase. Its cognate antitoxin is VapB34. In Mycobacterium tuberculosis (strain CDC 1551 / Oshkosh), this protein is Putative ribonuclease VapC34 (vapC34).